The sequence spans 678 residues: MLLALLLTMLLYASLQAQENSFTINSIHMESRPSWEVSNGQKLTLQCLVDISTTSKSRPQHQVLFYKDDALVYNVSSSEHTESFVIPQSRVFHAGKYKCTVILNSKEKTTIEYQLTVNGVPMPEVTVDKKEVTEGGIVTVNCSMQEEKPPIYFKIEKVELGTKNVKLSREKTSNMNFVLIEFPIEEQDHLLVFRCQAGVLSGIKMQTSEFIRSEYVTVQEFFSTPKFQIQPPEMIIEGNQLHIKCSVQVAHLAQEFPEIIIQKDKAIVATSKQSKEAVYSVMALVEHSGHYTCKVESNRISKASSILVNITELFPRPKLELSSSRLDQGEMLDLSCSVSGAPVANFTIQKEETVLSQYQNFSKIAEERDSGLYSCTAGIGKVVKRSNLVPVQVCEMLSKPRIFHDAKFEIIKGQIIGISCQSVNGTAPITYRLLRAKSNFQTVQKNSNDPVTFTDKPTRDMEYQCIVDNCHSHPEVRSEILRVKVIAPVDEVTISILSGNDVQSGDEMVLRCSVKEGTGPVTFQFYKEKEGRPFHEETVNDTQVFWHHEQTSKEQEGQYYCTAFNRASIVTSLRSGPLTVRVFLAPWKKGLIAVVVIGVVIAALIVAAKYYFLRKAKAKQKPVEMSRPAVPLLNSNSEKVSEPSVETNSHYDSQNMDVEYTEVEVSSLEPHQENGRLP.

Residues 1–17 (MLLALLLTMLLYASLQA) form the signal peptide. At 18–589 (QENSFTINSI…VRVFLAPWKK (572 aa)) the chain is on the extracellular side. Ig-like C2-type domains lie at 40-126 (GQKL…PEVT), 135-213 (GGIV…FIRS), 225-309 (PKFQ…ILVN), 315-391 (PRPK…LVPV), 413-472 (GQII…NCHS), and 488-577 (PVDE…RSGP). Cys-47 and Cys-99 form a disulfide bridge. N-linked (GlcNAc...) asparagine glycosylation is found at Asn-74 and Asn-141. Disulfide bonds link Cys-142/Cys-195 and Cys-245/Cys-293. Asn-309, Asn-345, Asn-360, Asn-424, and Asn-540 each carry an N-linked (GlcNAc...) asparagine glycan. 3 cysteine pairs are disulfide-bonded: Cys-336–Cys-375, Cys-420–Cys-465, and Cys-512–Cys-561. The helical transmembrane segment at 590–610 (GLIAVVVIGVVIAALIVAAKY) threads the bilayer. The Cytoplasmic segment spans residues 611–678 (YFLRKAKAKQ…EPHQENGRLP (68 aa)). A disordered region spans residues 634-653 (NSNSEKVSEPSVETNSHYDS). The short motif at 658-663 (VEYTEV) is the ITIM motif element. Position 660 is a phosphotyrosine; by FER (Tyr-660).

In terms of assembly, trans-homodimer (via Ig-like C2-type 1 and Ig-like C2-type 2 domains); trans-homodimerization is required for cell-cell interaction. Forms a complex with BDKRB2 and GNAQ. Interacts with BDKRB2 and GNAQ. Interacts with PTPN11. Interacts with FER. Interacts with CD177; the interaction is Ca(2+)-dependent; the interaction is direct. Phosphorylated on Ser and Tyr residues after cellular activation. In endothelial cells Fyn mediates mechanical-force (stretch or pull) induced tyrosine phosphorylation. Phosphorylated on tyrosine residues by FER and FES in response to FCER1 activation. In terms of processing, palmitoylation by ZDHHC21 is necessary for cell surface expression in endothelial cells and enrichment in membrane rafts.

The protein resides in the cell membrane. Its subcellular location is the membrane raft. The protein localises to the cell junction. In terms of biological role, cell adhesion molecule which is required for leukocyte transendothelial migration (TEM) under most inflammatory conditions. Tyr-660 plays a critical role in TEM and is required for efficient trafficking of PECAM1 to and from the lateral border recycling compartment (LBRC) and is also essential for the LBRC membrane to be targeted around migrating leukocytes. Trans-homophilic interaction may play a role in endothelial cell-cell adhesion via cell junctions. Heterophilic interaction with CD177 plays a role in transendothelial migration of neutrophils. Homophilic ligation of PECAM1 prevents macrophage-mediated phagocytosis of neighboring viable leukocytes by transmitting a detachment signal. Promotes macrophage-mediated phagocytosis of apoptotic leukocytes by tethering them to the phagocytic cells; PECAM1-mediated detachment signal appears to be disabled in apoptotic leukocytes. Modulates bradykinin receptor BDKRB2 activation. Regulates bradykinin- and hyperosmotic shock-induced ERK1/2 activation in endothelial cells. Induces susceptibility to atherosclerosis. The polypeptide is Platelet endothelial cell adhesion molecule (Pecam1) (Rattus norvegicus (Rat)).